The sequence spans 474 residues: ATP synthase subunit beta, chloroplastic (474 aa).

ATP is bound at residue 155-162; it reads GGAGVGKT.

It belongs to the ATPase alpha/beta chains family. F-type ATPases have 2 components, CF(1) - the catalytic core - and CF(0) - the membrane proton channel. CF(1) has five subunits: alpha(3), beta(3), gamma(1), delta(1), epsilon(1). CF(0) has four main subunits: a(1), b(1), b'(1) and c(9-12).

It localises to the plastid. Its subcellular location is the chloroplast thylakoid membrane. The enzyme catalyses ATP + H2O + 4 H(+)(in) = ADP + phosphate + 5 H(+)(out). Its function is as follows. Produces ATP from ADP in the presence of a proton gradient across the membrane. The catalytic sites are hosted primarily by the beta subunits. This Thalassiosira pseudonana (Marine diatom) protein is ATP synthase subunit beta, chloroplastic.